We begin with the raw amino-acid sequence, 210 residues long: Large ribosomal subunit protein uL3 (210 aa).

The disordered stretch occupies residues 126-150; sequence VSATHGSHRNHRKPGSVGASSTPSR.

Belongs to the universal ribosomal protein uL3 family. As to quaternary structure, part of the 50S ribosomal subunit. Forms a cluster with proteins L14 and L19.

In terms of biological role, one of the primary rRNA binding proteins, it binds directly near the 3'-end of the 23S rRNA, where it nucleates assembly of the 50S subunit. This chain is Large ribosomal subunit protein uL3, found in Tropheryma whipplei (strain TW08/27) (Whipple's bacillus).